The following is a 455-amino-acid chain: ATP-dependent protease ATPase subunit HslU (455 aa).

Residues Val23, 65–70 (GVGKTE), Asp266, Glu333, and Arg405 each bind ATP.

Belongs to the ClpX chaperone family. HslU subfamily. As to quaternary structure, a double ring-shaped homohexamer of HslV is capped on each side by a ring-shaped HslU homohexamer. The assembly of the HslU/HslV complex is dependent on binding of ATP.

Its subcellular location is the cytoplasm. Functionally, ATPase subunit of a proteasome-like degradation complex; this subunit has chaperone activity. The binding of ATP and its subsequent hydrolysis by HslU are essential for unfolding of protein substrates subsequently hydrolyzed by HslV. HslU recognizes the N-terminal part of its protein substrates and unfolds these before they are guided to HslV for hydrolysis. In Xanthomonas euvesicatoria pv. vesicatoria (strain 85-10) (Xanthomonas campestris pv. vesicatoria), this protein is ATP-dependent protease ATPase subunit HslU.